A 71-amino-acid chain; its full sequence is Conotoxin LvVIB (71 aa).

The signal sequence occupies residues 1-17; it reads VLIIAVLFLTASELVTA. A propeptide spanning residues 18 to 41 is cleaved from the precursor; it reads DYTRDKWQYRAASLRDAMRNFRDT. Intrachain disulfides connect Cys-43–Cys-57, Cys-50–Cys-62, and Cys-56–Cys-69.

This sequence belongs to the conotoxin O1 superfamily. In terms of tissue distribution, expressed by the venom duct.

The protein localises to the secreted. This Conus lividus (Livid cone) protein is Conotoxin LvVIB.